The following is a 375-amino-acid chain: o-succinylbenzoate synthase (375 aa).

Residue Lys166 is the Proton donor of the active site. Asp191, Glu216, and Asp241 together coordinate Mg(2+). Lys265 (proton acceptor) is an active-site residue.

It belongs to the mandelate racemase/muconate lactonizing enzyme family. MenC type 2 subfamily. Homotetramer. A divalent metal cation serves as cofactor.

It carries out the reaction (1R,6R)-6-hydroxy-2-succinyl-cyclohexa-2,4-diene-1-carboxylate = 2-succinylbenzoate + H2O. The enzyme catalyses N-acetyl-D-methionine = N-acetyl-L-methionine. The catalysed reaction is N-acetyl-D-phenylalanine = N-acetyl-L-phenylalanine. The protein operates within quinol/quinone metabolism; 1,4-dihydroxy-2-naphthoate biosynthesis; 1,4-dihydroxy-2-naphthoate from chorismate: step 4/7. It functions in the pathway quinol/quinone metabolism; menaquinone biosynthesis. In terms of biological role, converts 2-succinyl-6-hydroxy-2,4-cyclohexadiene-1-carboxylate (SHCHC) to 2-succinylbenzoate (OSB). Also acts as a N-succinylamino acid racemase (NSAR) that catalyzes the racemization of various N-succinylamino acids, including N-succinyl-alanine and N-succinyl-phenylalanine. Can catalyze the racemization of a broad range of N-acylamino acids, including N-acetyl-methionine, N-acetyl-phenylalanine, N-carbamoyl-methionine, N-formyl-D-methionine, N-formyl-D-norleucine and N-carbamoyl-D-norleucine. May be a bifunctional enzyme involved in menaquinone biosynthesis and in an irreversible pathway for the conversion of D- to L-amino acids, thereby facilitating the survival and/or growth of the organism. In Geobacillus kaustophilus, this protein is o-succinylbenzoate synthase.